A 219-amino-acid chain; its full sequence is MSTIDTKTSRGLLGKKLGMTQVWDENDTLIPVTVIEITPNVVTQVRTPEADGYNAVQIAYGQIDRRKVNKPSAGHFDKAGVTPRRHLTEVRTADAAEYSAGQELTVDGTFEAGQLVDVVGTSKSKGFAGVMKRHNFQGVSASHGAHRNHRKPGSIGASSTPSRVFKGMRMAGRMGGERVTVLNLKVQAIDAEKGLLLVKGAVPGARGRIVFVRNAVKGA.

The interval 140-163 (SASHGAHRNHRKPGSIGASSTPSR) is disordered.

The protein belongs to the universal ribosomal protein uL3 family. As to quaternary structure, part of the 50S ribosomal subunit. Forms a cluster with proteins L14 and L19.

In terms of biological role, one of the primary rRNA binding proteins, it binds directly near the 3'-end of the 23S rRNA, where it nucleates assembly of the 50S subunit. The chain is Large ribosomal subunit protein uL3 from Leifsonia xyli subsp. xyli (strain CTCB07).